Reading from the N-terminus, the 399-residue chain is Presilphiperfolan-8-beta-ol synthase (399 aa).

The disordered stretch occupies residues 1 to 60; it reads MAIPALEPQLHDADTSSNNMSSNSTDSGYDTNSTTPLEKSEKPNTQELKQQQLDPKRPPF. Over residues 15 to 27 the composition is skewed to low complexity; that stretch reads TSSNNMSSNSTDS. A compositionally biased stretch (polar residues) spans 28–37; sequence GYDTNSTTPL. Mg(2+)-binding residues include aspartate 141, asparagine 285, and serine 289. The DDXXD motif motif lies at 141 to 145; the sequence is DDQFD. Residues arginine 373 and tyrosine 374 each contribute to the (2E,6E)-farnesyl diphosphate site.

It belongs to the terpene synthase family. Mg(2+) serves as cofactor.

It catalyses the reaction (2E,6E)-farnesyl diphosphate + H2O = presilphiperfolan-8beta-ol + diphosphate. Its pathway is secondary metabolite biosynthesis. Functionally, presilphiperfolan-8-beta-ol synthase; part of the gene cluster that mediates the biosynthesis of botrydial. Botrydial is necessary for colonization of plant tissue by the T4 strain. It is a strain-dependent virulence factor since highly aggressive strains like SAS56 or B05 still retain substantial virulence when botrydial synthesis is impaired, since they produce also botcinic acid. The first step of botrydial biosynthesis is performed by the sesquiterpene synthase BOT2 which catalyzes the cyclization of farnesyl diphosphate (FPP) to presilphiperfolan-8-beta-ol (PSP). The cytochrome P450 monooxygenase BOT4 then catalyzes the hydroxylation at C-4 to give a probotryane intermediate. Acetylation of the hydroxyl at C-4 is carried out by the acetyltransferase BOT5, followed by the combined action of the P450 monooxygenases BOT3 and BOT1, to yield finally the glycol, via the regio- and stereospecific hydroxylations at C-10 and C-15 of the probotryane intermediates, respectively. The cleavage of the C10-C15 bond of probotryane skeleton is an intriguing and chemically important reaction, which could be mediated by some of the monooxygenases or by a combination of them. It is possible that either BOT3 or BOT1 would oxidize either the 10- or the 15-hydroxy group to the hydroperoxide derivative, which would then undergo heterolytic fragmentation to give the dialdehyde botrydial. Finally, the dehydrogenase BOT7 might be involved in the conversion of botrydial to dihydrobotrydial. The sequence is that of Presilphiperfolan-8-beta-ol synthase (BOT2) from Botryotinia fuckeliana (Noble rot fungus).